The sequence spans 342 residues: Pre-mRNA-splicing factor 18 (342 aa).

Met-1 carries the N-acetylmethionine modification.

This sequence belongs to the PRP18 family. Heterodimer with PPIH. Interacts with PRPF4 and with the spliceosome. Part of a complex containing U4/U6 snRNPs.

It is found in the nucleus speckle. Its function is as follows. Participates in the second step of pre-mRNA splicing. In Mus musculus (Mouse), this protein is Pre-mRNA-splicing factor 18 (Prpf18).